The following is a 106-amino-acid chain: Large ribosomal subunit protein uL23 (106 aa).

The protein belongs to the universal ribosomal protein uL23 family. Part of the 50S ribosomal subunit. Contacts protein L29, and trigger factor when it is bound to the ribosome.

Functionally, one of the early assembly proteins it binds 23S rRNA. One of the proteins that surrounds the polypeptide exit tunnel on the outside of the ribosome. Forms the main docking site for trigger factor binding to the ribosome. The protein is Large ribosomal subunit protein uL23 of Acinetobacter baumannii (strain SDF).